A 280-amino-acid chain; its full sequence is Eukaryotic translation initiation factor 3 subunit F-1 (280 aa).

One can recognise an MPN domain in the interval 8 to 138; the sequence is VRVHPVVLFQ…LRAYVCIQLG (131 aa).

This sequence belongs to the eIF-3 subunit F family. Component of the eukaryotic translation initiation factor 3 (eIF-3) complex. The eIF-3 complex interacts with pix.

The protein localises to the cytoplasm. In terms of biological role, component of the eukaryotic translation initiation factor 3 (eIF-3) complex, which is involved in protein synthesis of a specialized repertoire of mRNAs and, together with other initiation factors, stimulates binding of mRNA and methionyl-tRNAi to the 40S ribosome. The eIF-3 complex specifically targets and initiates translation of a subset of mRNAs involved in cell proliferation. The protein is Eukaryotic translation initiation factor 3 subunit F-1 of Drosophila ananassae (Fruit fly).